The sequence spans 754 residues: Nitrate reductase (754 aa).

A signal peptide (tat-type signal) is located at residues 1-31 (MKFTRRSFVKASALATAMVAAGCSPQPVAPK). One can recognise a 4Fe-4S Mo/W bis-MGD-type domain in the interval 39–95 (ATWYKTVCRYCGVGCGVMVAAKDNRVVAVKGDTENPVNKGLLCVKGYYLDRIMNTEE). [4Fe-4S] cluster-binding residues include Cys-46, Cys-49, Cys-53, and Cys-81. Mo-bis(molybdopterin guanine dinucleotide) is bound by residues Lys-83, Gln-144, Asn-169, Cys-173, 256–258 (GTD), Met-341, Gln-345, Asn-451, Lys-497, Asp-524, 642–651 (TGRILEHWHT), Asn-728, and Lys-745.

Belongs to the prokaryotic molybdopterin-containing oxidoreductase family. NasA/NapA/NarB subfamily. Component of the nitrate reductase NapAB complex composed of NapA and NapB. [4Fe-4S] cluster serves as cofactor. Mo-bis(molybdopterin guanine dinucleotide) is required as a cofactor. Post-translationally, predicted to be exported by the Tat system. The position of the signal peptide cleavage has not been experimentally proven.

The protein localises to the secreted. The enzyme catalyses 2 Fe(II)-[cytochrome] + nitrate + 2 H(+) = 2 Fe(III)-[cytochrome] + nitrite + H2O. In terms of biological role, catalytic subunit of the nitrate reductase complex NapAB. Receives electrons from NapB and catalyzes the reduction of nitrate to nitrite. This chain is Nitrate reductase, found in Symbiobacterium thermophilum (strain DSM 24528 / JCM 14929 / IAM 14863 / T).